Consider the following 340-residue polypeptide: Thylakoidal processing peptidase 1, chloroplastic (340 aa).

A chloroplast-targeting transit peptide spans 1–52 (MAIRITFTYSTHVARNLVGTRVGPGGYCFESLVRPRFFSHKRDFDRSPRNRP). The helical transmembrane segment at 155 to 175 (EDAKAAFTAVTVSILFRSALA) threads the bilayer. At 176 to 340 (EPKSIPSTSM…AITRGPVAVS (165 aa)) the chain is on the lumenal, thylakoid side. The active site involves S184.

It belongs to the peptidase S26 family.

The protein resides in the plastid. The protein localises to the chloroplast thylakoid membrane. The catalysed reaction is Cleavage of hydrophobic, N-terminal signal or leader sequences from secreted and periplasmic proteins.. Its function is as follows. Cleaves the thylakoid-transfer domain from a chloroplast protein. This Arabidopsis thaliana (Mouse-ear cress) protein is Thylakoidal processing peptidase 1, chloroplastic (TPP1).